The following is a 603-amino-acid chain: Phosphomethylpyrimidine synthase (603 aa).

Residues asparagine 224, methionine 253, tyrosine 282, histidine 318, 338–340 (SRG), 379–382 (DGLR), and glutamate 418 contribute to the substrate site. Histidine 422 contributes to the Zn(2+) binding site. Position 445 (tyrosine 445) interacts with substrate. Histidine 486 contributes to the Zn(2+) binding site. 3 residues coordinate [4Fe-4S] cluster: cysteine 566, cysteine 569, and cysteine 574.

It belongs to the ThiC family. As to quaternary structure, homodimer. [4Fe-4S] cluster is required as a cofactor.

It carries out the reaction 5-amino-1-(5-phospho-beta-D-ribosyl)imidazole + S-adenosyl-L-methionine = 4-amino-2-methyl-5-(phosphooxymethyl)pyrimidine + CO + 5'-deoxyadenosine + formate + L-methionine + 3 H(+). The protein operates within cofactor biosynthesis; thiamine diphosphate biosynthesis. Its function is as follows. Catalyzes the synthesis of the hydroxymethylpyrimidine phosphate (HMP-P) moiety of thiamine from aminoimidazole ribotide (AIR) in a radical S-adenosyl-L-methionine (SAM)-dependent reaction. This chain is Phosphomethylpyrimidine synthase, found in Xylella fastidiosa (strain Temecula1 / ATCC 700964).